The sequence spans 720 residues: Long chain acyl-CoA synthetase 8 (720 aa).

An N-acetylmethionine modification is found at methionine 1. 279-290 is an ATP binding site; it reads IMFTSGSTGLPK. Residues 554-582 are fatty acid-binding; sequence DEKGTRWFYTGDIGRFHPDGCLEVIDRKK.

It belongs to the ATP-dependent AMP-binding enzyme family. Mg(2+) is required as a cofactor.

The catalysed reaction is a long-chain fatty acid + ATP + CoA = a long-chain fatty acyl-CoA + AMP + diphosphate. Its pathway is lipid metabolism; fatty acid metabolism. Its function is as follows. Activation of long-chain fatty acids for both synthesis of cellular lipids, and degradation via beta-oxidation. Preferentially uses palmitate, palmitoleate, oleate and linoleate. The sequence is that of Long chain acyl-CoA synthetase 8 (LACS8) from Arabidopsis thaliana (Mouse-ear cress).